The following is a 419-amino-acid chain: UDP-N-acetylglucosamine 1-carboxyvinyltransferase 1 (419 aa).

22-23 (KN) serves as a coordination point for phosphoenolpyruvate. A UDP-N-acetyl-alpha-D-glucosamine-binding site is contributed by R92. The active-site Proton donor is C116. C116 is subject to 2-(S-cysteinyl)pyruvic acid O-phosphothioketal. UDP-N-acetyl-alpha-D-glucosamine is bound by residues 121–125 (RPIDL), D306, and I328.

The protein belongs to the EPSP synthase family. MurA subfamily.

It localises to the cytoplasm. It catalyses the reaction phosphoenolpyruvate + UDP-N-acetyl-alpha-D-glucosamine = UDP-N-acetyl-3-O-(1-carboxyvinyl)-alpha-D-glucosamine + phosphate. The protein operates within cell wall biogenesis; peptidoglycan biosynthesis. Cell wall formation. Adds enolpyruvyl to UDP-N-acetylglucosamine. The sequence is that of UDP-N-acetylglucosamine 1-carboxyvinyltransferase 1 from Streptococcus agalactiae serotype Ia (strain ATCC 27591 / A909 / CDC SS700).